The sequence spans 285 residues: Cold sensitive U2 snRNA suppressor 2 (285 aa).

An RRM 1 domain is found at 45–130; sequence TSIYISGLPT…KQIRVERAQF (86 aa). Residues 135 to 149 show a composition bias toward basic and acidic residues; sequence GDNMHGKENDLKEFN. The tract at residues 135–154 is disordered; that stretch reads GDNMHGKENDLKEFNGPEPP. S163 carries the post-translational modification Phosphoserine. Residues 183-265 form the RRM 2 domain; that stretch reads RTVIFANVFN…QKLLAFISGD (83 aa). Residues 265 to 285 form a disordered region; it reads DENTSSTSDKNEDSEVEDDLI. Residues 276 to 285 show a composition bias toward acidic residues; sequence EDSEVEDDLI.

Belongs to the HTATSF1 family. As to quaternary structure, interacts with PRP11. Associates with the U2 snRNA.

Its function is as follows. U2 snRNP protein which helps to refold U2 into a structure favorable for its binding to SF3b and SF3a prior to spliceosome assembly. Mediates functional interactions between U2 RNA and PRP5. Enforces ATP dependence during formation of the prespliceosome by brokering an interaction between PRP5 and the U2 snRNP that depends on correct U2 RNA structure. The protein is Cold sensitive U2 snRNA suppressor 2 (CUS2) of Saccharomyces cerevisiae (strain ATCC 204508 / S288c) (Baker's yeast).